A 439-amino-acid chain; its full sequence is FK506-binding protein 59 (439 aa).

2 PPIase FKBP-type domains span residues 32–120 (GCTV…LGWK) and 149–235 (GAFV…VDCG). 3 TPR repeats span residues 252-285 (AKVY…LPTT), 297-330 (VATH…DKNN), and 331-364 (VKAL…EPGN).

In terms of assembly, interacts with inaD and trpl, and may be part of the inaD signaling complex. As to expression, expression in the embryo is limited to three tissues: lymph glands, Garland cells and oenocyte cells.

The catalysed reaction is [protein]-peptidylproline (omega=180) = [protein]-peptidylproline (omega=0). Functionally, may have a role in phototransduction; inhibits or prevents Ca(2+) induced stimulation of the trpl ion channel. The protein is FK506-binding protein 59 of Drosophila melanogaster (Fruit fly).